Here is a 427-residue protein sequence, read N- to C-terminus: Glutamate-1-semialdehyde 2,1-aminomutase (427 aa).

Residue Lys264 is modified to N6-(pyridoxal phosphate)lysine.

The protein belongs to the class-III pyridoxal-phosphate-dependent aminotransferase family. HemL subfamily. Homodimer. It depends on pyridoxal 5'-phosphate as a cofactor.

The protein localises to the cytoplasm. It carries out the reaction (S)-4-amino-5-oxopentanoate = 5-aminolevulinate. The protein operates within porphyrin-containing compound metabolism; protoporphyrin-IX biosynthesis; 5-aminolevulinate from L-glutamyl-tRNA(Glu): step 2/2. The polypeptide is Glutamate-1-semialdehyde 2,1-aminomutase (Clostridium botulinum (strain Eklund 17B / Type B)).